Consider the following 719-residue polypeptide: Glycine--tRNA ligase beta subunit (719 aa).

The tract at residues 65 to 84 is disordered; the sequence is PDREEEIKGPPAKAAFKDGK.

The protein belongs to the class-II aminoacyl-tRNA synthetase family. In terms of assembly, tetramer of two alpha and two beta subunits.

It localises to the cytoplasm. It carries out the reaction tRNA(Gly) + glycine + ATP = glycyl-tRNA(Gly) + AMP + diphosphate. This chain is Glycine--tRNA ligase beta subunit, found in Trichodesmium erythraeum (strain IMS101).